The sequence spans 457 residues: Putative F-box protein At3g58860 (457 aa).

Positions 6 to 54 (MDLFSKLPDEVISHILSSLPTKEAASTSVLAKKWRYLFAFVPSLDFNDS) constitute an F-box domain.

The chain is Putative F-box protein At3g58860 from Arabidopsis thaliana (Mouse-ear cress).